Reading from the N-terminus, the 179-residue chain is UPF0167 protein PA1536 (179 aa).

It belongs to the UPF0167 family.

In Pseudomonas aeruginosa (strain ATCC 15692 / DSM 22644 / CIP 104116 / JCM 14847 / LMG 12228 / 1C / PRS 101 / PAO1), this protein is UPF0167 protein PA1536.